We begin with the raw amino-acid sequence, 676 residues long: DNA ligase (676 aa).

Residues 35–39, 84–85, and glutamate 118 each bind NAD(+); these read DYEFD and SL. Lysine 120 serves as the catalytic N6-AMP-lysine intermediate. The NAD(+) site is built by arginine 141, glutamate 184, lysine 299, and lysine 323. Zn(2+) is bound by residues cysteine 417, cysteine 420, cysteine 435, and cysteine 441. The BRCT domain occupies 600-676; that stretch reads LINRNFEGVN…ISEDEFNAML (77 aa).

Belongs to the NAD-dependent DNA ligase family. LigA subfamily. Mg(2+) serves as cofactor. Requires Mn(2+) as cofactor.

It carries out the reaction NAD(+) + (deoxyribonucleotide)n-3'-hydroxyl + 5'-phospho-(deoxyribonucleotide)m = (deoxyribonucleotide)n+m + AMP + beta-nicotinamide D-nucleotide.. Functionally, DNA ligase that catalyzes the formation of phosphodiester linkages between 5'-phosphoryl and 3'-hydroxyl groups in double-stranded DNA using NAD as a coenzyme and as the energy source for the reaction. It is essential for DNA replication and repair of damaged DNA. The sequence is that of DNA ligase from Chlorobium phaeobacteroides (strain DSM 266 / SMG 266 / 2430).